The primary structure comprises 139 residues: Hydrogenase maturation factor HypA (139 aa).

His2 is a binding site for Ni(2+). Positions 73, 76, 110, and 113 each coordinate Zn(2+).

The protein belongs to the HypA/HybF family.

Involved in the maturation of [NiFe] hydrogenases. Required for nickel insertion into the metal center of the hydrogenase. The protein is Hydrogenase maturation factor HypA of Thermococcus gammatolerans (strain DSM 15229 / JCM 11827 / EJ3).